A 136-amino-acid polypeptide reads, in one-letter code: Histone H3-7 (136 aa).

The tract at residues 1-43 is disordered; the sequence is MARTKQTARKSTGGKAPRKQLATKAARKSAPATGGVKKPHRYR. Arg-3 is modified (asymmetric dimethylarginine). Arg-3 carries the post-translational modification Citrulline; alternate. Thr-4 is subject to Phosphothreonine. Lys-5 is subject to Allysine; alternate. Lys-5 carries the post-translational modification N6,N6,N6-trimethyllysine; alternate. Residue Lys-5 is modified to N6,N6-dimethyllysine; alternate. Lys-5 carries the post-translational modification N6-(2-hydroxyisobutyryl)lysine; alternate. At Lys-5 the chain carries N6-(beta-hydroxybutyryl)lysine; alternate. Lys-5 is modified (N6-acetyllysine; alternate). Lys-5 is subject to N6-methyllysine; alternate. Residue Gln-6 is modified to 5-glutamyl dopamine; alternate. Gln-6 bears the 5-glutamyl serotonin; alternate mark. The residue at position 7 (Thr-7) is a Phosphothreonine. At Arg-9 the chain carries Citrulline; alternate. Residue Arg-9 is modified to Symmetric dimethylarginine. An N6,N6,N6-trimethyllysine; alternate modification is found at Lys-10. Lys-10 carries the post-translational modification N6,N6-dimethyllysine; alternate. Lys-10 carries the N6-(2-hydroxyisobutyryl)lysine; alternate modification. The residue at position 10 (Lys-10) is an N6-(beta-hydroxybutyryl)lysine; alternate. Position 10 is an N6-acetyllysine; alternate (Lys-10). The residue at position 10 (Lys-10) is an N6-methyllysine; alternate. Lys-10 is subject to N6-lactoyllysine; alternate. An ADP-ribosylserine; alternate modification is found at Ser-11. Residue Ser-11 is modified to Phosphoserine; alternate. At Thr-12 the chain carries Phosphothreonine. Lys-15 is subject to N6-(2-hydroxyisobutyryl)lysine; alternate. At Lys-15 the chain carries N6-(beta-hydroxybutyryl)lysine; alternate. Lys-15 carries the N6-acetyllysine; alternate modification. An N6-lactoyllysine; alternate modification is found at Lys-15. An N6-glutaryllysine; alternate modification is found at Lys-15. N6-succinyllysine; alternate is present on Lys-15. Residue Arg-18 is modified to Asymmetric dimethylarginine. Position 18 is a citrulline; alternate (Arg-18). N6-(2-hydroxyisobutyryl)lysine; alternate occurs at positions 19 and 24. Lys-19 and Lys-24 each carry N6-(beta-hydroxybutyryl)lysine; alternate. Lys-19 and Lys-24 each carry N6-acetyllysine; alternate. N6-methyllysine; alternate is present on residues Lys-19 and Lys-24. Residues Lys-19 and Lys-24 each carry the N6-lactoyllysine; alternate modification. Residues Lys-19 and Lys-24 each carry the N6-glutaryllysine; alternate modification. An N6-butyryllysine; alternate mark is found at Lys-19 and Lys-24. Arg-27 carries the citrulline modification. At Lys-28 the chain carries N6,N6,N6-trimethyllysine; alternate. Position 28 is an N6,N6-dimethyllysine; alternate (Lys-28). An N6-(2-hydroxyisobutyryl)lysine; alternate modification is found at Lys-28. Lys-28 carries the N6-acetyllysine; alternate modification. Lys-28 carries the N6-methyllysine; alternate modification. Lys-28 is subject to N6-lactoyllysine; alternate. Residue Lys-28 is modified to N6-glutaryllysine; alternate. Ser-29 carries the ADP-ribosylserine; alternate modification. Ser-29 carries the post-translational modification Phosphoserine; alternate. Lys-37 is modified (N6,N6,N6-trimethyllysine; alternate). Lys-37 carries the N6,N6-dimethyllysine; alternate modification. An N6-(2-hydroxyisobutyryl)lysine; alternate modification is found at Lys-37. At Lys-37 the chain carries N6-acetyllysine; alternate. Residue Lys-37 is modified to N6-methyllysine; alternate. Position 38 is an N6-methyllysine (Lys-38). Tyr-42 carries the post-translational modification Phosphotyrosine. The residue at position 57 (Lys-57) is an N6,N6,N6-trimethyllysine; alternate. An N6-(2-hydroxyisobutyryl)lysine; alternate modification is found at Lys-57. An N6-(beta-hydroxybutyryl)lysine; alternate modification is found at Lys-57. The residue at position 57 (Lys-57) is an N6-acetyllysine; alternate. Lys-57 is modified (N6-lactoyllysine; alternate). At Lys-57 the chain carries N6-glutaryllysine; alternate. N6-succinyllysine; alternate is present on Lys-57. Lys-57 is subject to N6-methyllysine. Residue Ser-58 is modified to Phosphoserine. N6-(2-hydroxyisobutyryl)lysine; alternate is present on residues Lys-65 and Lys-80. N6-methyllysine; alternate is present on residues Lys-65 and Lys-80. Lys-80 carries the N6,N6,N6-trimethyllysine; alternate modification. Lys-80 is subject to N6,N6-dimethyllysine; alternate. Lys-80 is subject to N6-acetyllysine; alternate. N6-lactoyllysine; alternate is present on Lys-80. At Lys-80 the chain carries N6-glutaryllysine; alternate. The residue at position 80 (Lys-80) is an N6-succinyllysine; alternate. Thr-81 carries the phosphothreonine modification. Position 87 is a phosphoserine (Ser-87). Thr-108 bears the Phosphothreonine mark. Residues Lys-116 and Lys-123 each carry the N6-acetyllysine; alternate modification. N6-glutaryllysine; alternate occurs at positions 116 and 123. N6-(2-hydroxyisobutyryl)lysine; alternate is present on Lys-123. Lys-123 carries the post-translational modification N6-methyllysine; alternate. Lys-123 bears the N6-succinyllysine; alternate mark.

Belongs to the histone H3 family. As to quaternary structure, the nucleosome is a histone octamer containing two molecules each of H2A, H2B, H3 and H4 assembled in one H3-H4 heterotetramer and two H2A-H2B heterodimers. The octamer wraps approximately 147 bp of DNA. During nucleosome assembly the chaperone ASF1A interacts with the histone H3-H4 heterodimer. In terms of processing, acetylation is generally linked to gene activation. Acetylation on Lys-10 (H3K9ac) impairs methylation at Arg-9 (H3R8me2s). Acetylation on Lys-19 (H3K18ac) and Lys-24 (H3K24ac) favors methylation at Arg-18 (H3R17me). Acetylation at Lys-123 (H3K122ac) by EP300/p300 plays a central role in chromatin structure: localizes at the surface of the histone octamer and stimulates transcription, possibly by promoting nucleosome instability. Citrullination at Arg-9 (H3R8ci) and/or Arg-18 (H3R17ci) by PADI4 impairs methylation and represses transcription. Post-translationally, asymmetric dimethylation at Arg-18 (H3R17me2a) by CARM1 is linked to gene activation. Symmetric dimethylation at Arg-9 (H3R8me2s) by PRMT5 is linked to gene repression. Asymmetric dimethylation at Arg-3 (H3R2me2a) by PRMT6 is linked to gene repression and is mutually exclusive with H3 Lys-5 methylation (H3K4me2 and H3K4me3). H3R2me2a is present at the 3' of genes regardless of their transcription state and is enriched on inactive promoters, while it is absent on active promoters. In terms of processing, methylation at Lys-5 (H3K4me), Lys-37 (H3K36me) and Lys-80 (H3K79me) are linked to gene activation. Methylation at Lys-5 (H3K4me) facilitates subsequent acetylation of H3 and H4. Methylation at Lys-80 (H3K79me) is associated with DNA double-strand break (DSB) responses and is a specific target for TP53BP1. Methylation at Lys-10 (H3K9me) and Lys-28 (H3K27me) are linked to gene repression. Methylation at Lys-10 (H3K9me) is a specific target for HP1 proteins (CBX1, CBX3 and CBX5) and prevents subsequent phosphorylation at Ser-11 (H3S10ph) and acetylation of H3 and H4. Methylation at Lys-5 (H3K4me) and Lys-80 (H3K79me) require preliminary monoubiquitination of H2B at 'Lys-120'. Methylation at Lys-10 (H3K9me) and Lys-28 (H3K27me) are enriched in inactive X chromosome chromatin. Monomethylation at Lys-57 (H3K56me1) by EHMT2/G9A in G1 phase promotes interaction with PCNA and is required for DNA replication. Phosphorylated at Thr-4 (H3T3ph) by HASPIN during prophase and dephosphorylated during anaphase. Phosphorylation at Ser-11 (H3S10ph) by AURKB is crucial for chromosome condensation and cell-cycle progression during mitosis and meiosis. In addition phosphorylation at Ser-11 (H3S10ph) by RPS6KA4 and RPS6KA5 is important during interphase because it enables the transcription of genes following external stimulation, like mitogens, stress, growth factors or UV irradiation and result in the activation of genes, such as c-fos and c-jun. Phosphorylation at Ser-11 (H3S10ph), which is linked to gene activation, prevents methylation at Lys-10 (H3K9me) but facilitates acetylation of H3 and H4. Phosphorylation at Ser-11 (H3S10ph) by AURKB mediates the dissociation of HP1 proteins (CBX1, CBX3 and CBX5) from heterochromatin. Phosphorylation at Ser-11 (H3S10ph) is also an essential regulatory mechanism for neoplastic cell transformation. Phosphorylated at Ser-29 (H3S28ph) by MAP3K20 isoform 1, RPS6KA5 or AURKB during mitosis or upon ultraviolet B irradiation. Phosphorylation at Thr-7 (H3T6ph) by PRKCB is a specific tag for epigenetic transcriptional activation that prevents demethylation of Lys-5 (H3K4me) by LSD1/KDM1A. At centromeres, specifically phosphorylated at Thr-12 (H3T11ph) from prophase to early anaphase, by DAPK3 and PKN1. Phosphorylation at Thr-12 (H3T11ph) by PKN1 or isoform M2 of PKM (PKM2) is a specific tag for epigenetic transcriptional activation that promotes demethylation of Lys-10 (H3K9me) by KDM4C/JMJD2C. Phosphorylation at Tyr-42 (H3Y41ph) by JAK2 promotes exclusion of CBX5 (HP1 alpha) from chromatin. Post-translationally, ubiquitinated. In terms of processing, lysine deamination at Lys-5 (H3K4all) to form allysine is mediated by LOXL2. Allysine formation by LOXL2 only takes place on H3K4me3 and results in gene repression. Butyrylation of histones marks active promoters and competes with histone acetylation. It is present during late spermatogenesis. Post-translationally, succinylation at Lys-80 (H3K79succ) by KAT2A takes place with a maximum frequency around the transcription start sites of genes. It gives a specific tag for epigenetic transcription activation. Desuccinylation at Lys-123 (H3K122succ) by SIRT7 in response to DNA damage promotes chromatin condensation and double-strand breaks (DSBs) repair. In terms of processing, serine ADP-ribosylation constitutes the primary form of ADP-ribosylation of proteins in response to DNA damage. Serine ADP-ribosylation at Ser-11 (H3S10ADPr) is mutually exclusive with phosphorylation at Ser-11 (H3S10ph) and impairs acetylation at Lys-10 (H3K9ac).

The protein resides in the nucleus. The protein localises to the chromosome. Its function is as follows. Core component of nucleosome. Nucleosomes wrap and compact DNA into chromatin, limiting DNA accessibility to the cellular machineries which require DNA as a template. Histones thereby play a central role in transcription regulation, DNA repair, DNA replication and chromosomal stability. DNA accessibility is regulated via a complex set of post-translational modifications of histones, also called histone code, and nucleosome remodeling. This is Histone H3-7 from Homo sapiens (Human).